A 215-amino-acid chain; its full sequence is Ceramide-1-phosphate transfer protein (215 aa).

Positions 57, 61, 107, 111, and 151 each coordinate an N-acylsphingoid base 1-phosphate.

The protein belongs to the GLTP family.

It is found in the cytoplasm. It localises to the cytosol. The protein resides in the golgi apparatus. The protein localises to the trans-Golgi network membrane. Its subcellular location is the cell membrane. It is found in the endosome membrane. It localises to the nucleus outer membrane. The enzyme catalyses N-(hexadecanoyl)-sphing-4-enine-1-phosphate(in) = N-(hexadecanoyl)-sphing-4-enine-1-phosphate(out). It catalyses the reaction N-(9Z-octadecenoyl)-sphing-4-enine-1-phosphate(in) = N-(9Z-octadecenoyl)-sphing-4-enine-1-phosphate(out). Functionally, mediates the intracellular transfer of ceramide-1-phosphate (C1P) between organelle membranes and the cell membrane. Required for normal structure of the Golgi stacks. Can bind phosphoceramides with a variety of aliphatic chains, but has a preference for lipids with saturated C16:0 or monounsaturated C18:1 aliphatic chains, and is inefficient with phosphoceramides containing lignoceryl (C24:0). Plays a role in the regulation of the cellular levels of ceramide-1-phosphate, and thereby contributes to the regulation of phospholipase PLA2G4A activity and the release of arachidonic acid. Has no activity with galactosylceramide, lactosylceramide, sphingomyelin, phosphatidylcholine, phosphatidic acid and ceramide. C1P transfer is stimulated by phosphatidylserine in C1P source vesicles. Regulates autophagy and pyroptosis, but not apoptosis. In Xenopus tropicalis (Western clawed frog), this protein is Ceramide-1-phosphate transfer protein (cptp).